The following is a 361-amino-acid chain: Phospho-N-acetylmuramoyl-pentapeptide-transferase (361 aa).

10 helical membrane passes run 21 to 41 (YITF…FVIG), 72 to 92 (TPTM…LLWV), 94 to 114 (LANV…LIGF), 135 to 155 (LAWT…VTPH), 169 to 189 (LLVN…VGAS), 200 to 220 (GLAI…AYLS), 240 to 260 (LAVF…FNAP), 263 to 283 (MVFM…AVSV), 289 to 309 (LVLA…MVQV), and 338 to 358 (TVVI…LSTL).

The protein belongs to the glycosyltransferase 4 family. MraY subfamily. Mg(2+) serves as cofactor.

The protein localises to the cell inner membrane. The catalysed reaction is UDP-N-acetyl-alpha-D-muramoyl-L-alanyl-gamma-D-glutamyl-meso-2,6-diaminopimeloyl-D-alanyl-D-alanine + di-trans,octa-cis-undecaprenyl phosphate = di-trans,octa-cis-undecaprenyl diphospho-N-acetyl-alpha-D-muramoyl-L-alanyl-D-glutamyl-meso-2,6-diaminopimeloyl-D-alanyl-D-alanine + UMP. The protein operates within cell wall biogenesis; peptidoglycan biosynthesis. Catalyzes the initial step of the lipid cycle reactions in the biosynthesis of the cell wall peptidoglycan: transfers peptidoglycan precursor phospho-MurNAc-pentapeptide from UDP-MurNAc-pentapeptide onto the lipid carrier undecaprenyl phosphate, yielding undecaprenyl-pyrophosphoryl-MurNAc-pentapeptide, known as lipid I. In Rhodospirillum centenum (strain ATCC 51521 / SW), this protein is Phospho-N-acetylmuramoyl-pentapeptide-transferase.